The sequence spans 131 residues: Small ribosomal subunit protein uS8 (131 aa).

Belongs to the universal ribosomal protein uS8 family. In terms of assembly, part of the 30S ribosomal subunit. Contacts proteins S5 and S12.

Its function is as follows. One of the primary rRNA binding proteins, it binds directly to 16S rRNA central domain where it helps coordinate assembly of the platform of the 30S subunit. In Ruminiclostridium cellulolyticum (strain ATCC 35319 / DSM 5812 / JCM 6584 / H10) (Clostridium cellulolyticum), this protein is Small ribosomal subunit protein uS8.